Here is a 283-residue protein sequence, read N- to C-terminus: Zinc-finger homeodomain protein 8 (283 aa).

A ZF-HD dimerization-type; degenerate zinc finger spans residues 23-68; the sequence is YKECMRNHAAAMGGQAFDGCGEYMPASPDSLKCAACGCHRSFHRRA. Disordered stretches follow at residues 131–171 and 244–283; these read AGRA…TKFT and GLGT…PISV. The span at 148–161 shows a compositional bias: gly residues; it reads GSAGGSGSGGGGIF. Positions 163–226 form a DNA-binding region, homeobox; sequence RKRFRTKFTP…NHKNQLASSP (64 aa). Residues 244-256 are compositionally biased toward gly residues; the sequence is GLGTGLGTGISGD. The segment covering 257 to 266 has biased composition (acidic residues); that stretch reads GDGDDDDTDD. Over residues 269 to 283 the composition is skewed to low complexity; the sequence is PRAAVSSPSPSPISV.

Homo- and heterodimer with other ZFHD proteins.

The protein resides in the nucleus. Its function is as follows. Putative transcription factor. The chain is Zinc-finger homeodomain protein 8 (ZHD8) from Oryza sativa subsp. japonica (Rice).